The primary structure comprises 153 residues: Transcriptional repressor NrdR (153 aa).

The segment at 3 to 34 (CPFCGYEDSKVVDTRPTNEGKTIKRRRECLKC) is a zinc-finger region. One can recognise an ATP-cone domain in the interval 49–139 (ILVIKKDNRR…VYRQFKDINT (91 aa)).

The protein belongs to the NrdR family. Zn(2+) serves as cofactor.

In terms of biological role, negatively regulates transcription of bacterial ribonucleotide reductase nrd genes and operons by binding to NrdR-boxes. The chain is Transcriptional repressor NrdR from Caldicellulosiruptor bescii (strain ATCC BAA-1888 / DSM 6725 / KCTC 15123 / Z-1320) (Anaerocellum thermophilum).